The sequence spans 456 residues: UPF0210 protein Dde_3704 (456 aa).

Belongs to the UPF0210 family. As to quaternary structure, homodimer.

The polypeptide is UPF0210 protein Dde_3704 (Oleidesulfovibrio alaskensis (strain ATCC BAA-1058 / DSM 17464 / G20) (Desulfovibrio alaskensis)).